The sequence spans 376 residues: Small RNA 2'-O-methyltransferase (376 aa).

Residues Thr-49, Asp-67, and Ser-103 each coordinate S-adenosyl-L-methionine. Mg(2+) contacts are provided by Glu-121, Glu-124, His-125, and His-171.

The protein belongs to the methyltransferase superfamily. HEN1 family. Mg(2+) is required as a cofactor.

The protein localises to the cytoplasm. It catalyses the reaction small RNA 3'-end nucleotide + S-adenosyl-L-methionine = small RNA 3'-end 2'-O-methylnucleotide + S-adenosyl-L-homocysteine + H(+). Functionally, methyltransferase that adds a 2'-O-methyl group at the 3'-end of piRNAs, a class of 24 to 30 nucleotide RNAs that are generated by a Dicer-independent mechanism and are primarily derived from transposons and other repeated sequence elements. This probably protects the 3'-end of piRNAs from uridylation activity and subsequent degradation. Stabilization of piRNAs is essential for gametogenesis. This is Small RNA 2'-O-methyltransferase (HENMT1) from Gallus gallus (Chicken).